The chain runs to 48 residues: Piguamerin (48 aa).

5 disulfide bridges follow: Cys3/Cys14, Cys8/Cys19, Cys21/Cys41, Cys26/Cys45, and Cys30/Cys47. The Antistasin-like domain occupies Cys19 to Cys47.

It belongs to the protease inhibitor I15 (antistasin) family.

Its subcellular location is the secreted. Its function is as follows. Inhibits plasma and tissue kallikrein, and trypsin. May be involved in leech hematophagia. The protein is Piguamerin of Hirudo nipponia (Korean blood-sucking leech).